The sequence spans 914 residues: PHD finger protein 14 (914 aa).

Positions 19–276 are disordered; the sequence is DALDYDSSDD…EDSLLERPQT (258 aa). Over residues 53–68 the composition is skewed to low complexity; sequence ESAAGSESDSDAAAAS. Residues 90-102 are compositionally biased toward basic and acidic residues; it reads EKVKESFSEETSS. Acidic residues-rich tracts occupy residues 155 to 168 and 191 to 233; these read ELNEMDDYDSEDDN and GEED…DSEE. The PHD-type 1 zinc-finger motif lies at 285–346; that stretch reads ILICCVCLGD…PWFCDACKNG (62 aa). Zn(2+) contacts are provided by C288, C291, C305, C308, H313, C316, C340, C343, C351, C354, H371, C374, C407, C410, C424, C429, H434, C437, C461, and H464. The C2HC pre-PHD-type zinc-finger motif lies at 348–381; it reads SPSCELCPSQDGIFKETDAGRWVHVVCALYVPGV. The segment at 405 to 465 adopts a PHD-type 2 zinc-finger fold; sequence KECSLCEDTR…PFFAYCKQHA (61 aa). A coiled-coil region spans residues 596–644; it reads MIQIQDNIVEQKNLKDKLESEQEKLHMEYDKLCESLEDLQNVNGQLRTE. Residues 692–746 form a PHD-type 3 zinc finger; it reads LYSCGICKKNQDQHLLLLCDTCKLHYHLGCLDPPLTRMPKKTKNSYWQCSECDQA. Positions 695, 698, 710, 713, 718, 721, 740, and 743 each coordinate Zn(2+). The interval 777–838 is disordered; the sequence is PQEMSPEPKK…PKADDTRTEC (62 aa). Residues 792-802 are compositionally biased toward basic residues; the sequence is TRTRGQKRKRM. Over residues 803 to 817 the composition is skewed to basic and acidic residues; it reads SICEEEKMEEPLPRE. Residues 835–888 form a PHD-type 4 zinc finger; that stretch reads RTECTTCKGPGDNENLVRCDECRLCYHFGCLDPPLKKSPKQTGYGWICQECDTS. C838, C841, C853, C856, H861, C864, C882, and C885 together coordinate Zn(2+). The interval 887-914 is disordered; it reads TSSSKEEEAQEVEEESVNEETAEQEIPD. The segment covering 894-914 has biased composition (acidic residues); it reads EAQEVEEESVNEETAEQEIPD.

As to quaternary structure, interacts with histone H3.

The protein resides in the nucleus. Its function is as follows. Histone-binding protein. Binds preferentially to unmodified histone H3 but can also bind to a lesser extent to histone H3 trimethylated at 'Lys-9' (H3K9me3) as well as to histone H3 monomethylated at 'Lys-27' (H3K27ac) and trimethylated at 'Lys-27' (H3K27me3). Represses PDGFRA expression, thus playing a role in regulation of mesenchymal cell proliferation. This Danio rerio (Zebrafish) protein is PHD finger protein 14.